The following is a 640-amino-acid chain: Chaperone protein DnaK (640 aa).

Threonine 199 is subject to Phosphothreonine; by autocatalysis. Positions 606–621 (QQAAGAGAQQADGTGK) are enriched in low complexity. The disordered stretch occupies residues 606–640 (QQAAGAGAQQADGTGKAADDGVVDAEFEEVKEDNK). Acidic residues predominate over residues 626–640 (GVVDAEFEEVKEDNK).

It belongs to the heat shock protein 70 family.

Functionally, acts as a chaperone. The sequence is that of Chaperone protein DnaK from Cellvibrio japonicus (strain Ueda107) (Pseudomonas fluorescens subsp. cellulosa).